The sequence spans 906 residues: ATP-dependent DNA helicase DDX11 (906 aa).

The 434-residue stretch at 9–442 folds into the Helicase ATP-binding domain; sequence GGIHFPFPFP…KNLMYIKQIL (434 aa). ATP is bound at residue 44–51; it reads SPTGTGKS. Positions 78 to 111 are disordered; sequence APGSGPPSSEKNSLLTSSSCQEPTDTPRPAGEPD. A compositionally biased stretch (low complexity) spans 85 to 96; sequence SSEKNSLLTSSS. Ser260 bears the Phosphoserine mark. [4Fe-4S] cluster contacts are provided by Cys265 and Cys283. The segment covering 284 to 301 has biased composition (basic and acidic residues); the sequence is VDMQRSKREKNGTGEDKP. The tract at residues 284–310 is disordered; sequence VDMQRSKREKNGTGEDKPKRKRQKIQT. 2 residues coordinate [4Fe-4S] cluster: Cys312 and Cys347. Positions 390-393 match the DEAH box motif; that stretch reads DEAH.

The protein belongs to the DEAD box helicase family. DEAH subfamily. DDX11/CHL1 sub-subfamily. As to quaternary structure, associates with the CTF18-RFC complex. Associates with a cohesin complex composed of RAD21, SMC1 proteins and SMC3. Interacts with CHTF18. Interacts with DSCC1. Interacts with FEN1; this interaction is direct and increases flap endonuclease activity of FEN1. Interacts with PCNA. Interacts with POLR1A and UBTF. Interacts with RAD21, SMC1 proteins and SMC3. Interacts with RFC2. Interacts with TIMELESS; this interaction increases recruitment of both proteins onto chromatin in response to replication stress induction by hydroxyurea. Requires [4Fe-4S] cluster as cofactor.

It is found in the nucleus. Its subcellular location is the nucleolus. The protein resides in the cytoplasm. It localises to the cytoskeleton. The protein localises to the spindle pole. It is found in the midbody. Its subcellular location is the microtubule organizing center. The protein resides in the centrosome. The enzyme catalyses Couples ATP hydrolysis with the unwinding of duplex DNA at the replication fork by translocating in the 5'-3' direction. This creates two antiparallel DNA single strands (ssDNA). The leading ssDNA polymer is the template for DNA polymerase III holoenzyme which synthesizes a continuous strand.. It catalyses the reaction ATP + H2O = ADP + phosphate + H(+). DNA-dependent ATPase and ATP-dependent DNA helicase that participates in various functions in genomic stability, including DNA replication, DNA repair and heterochromatin organization as well as in ribosomal RNA synthesis. Its double-stranded DNA helicase activity requires either a minimal 5'-single-stranded tail length of approximately 15 nt (flap substrates) or 10 nt length single-stranded gapped DNA substrates of a partial duplex DNA structure for helicase loading and translocation along DNA in a 5' to 3' direction. The helicase activity is capable of displacing duplex regions up to 100 bp, which can be extended up to 500 bp by the replication protein A (RPA) or the cohesion CTF18-replication factor C (Ctf18-RFC) complex activities. Also shows ATPase- and helicase activities on substrates that mimic key DNA intermediates of replication, repair and homologous recombination reactions, including forked duplex, anti-parallel G-quadruplex and three-stranded D-loop DNA molecules. Plays a role in DNA double-strand break (DSB) repair at the DNA replication fork during DNA replication recovery from DNA damage. Recruited with TIMELESS factor upon DNA-replication stress response at DNA replication fork to preserve replication fork progression, and hence ensure DNA replication fidelity. Also cooperates with TIMELESS factor during DNA replication to regulate proper sister chromatid cohesion and mitotic chromosome segregation. Stimulates 5'-single-stranded DNA flap endonuclease activity of FEN1 in an ATP- and helicase-independent manner; and hence it may contribute in Okazaki fragment processing at DNA replication fork during lagging strand DNA synthesis. Its ability to function at DNA replication fork is modulated by its binding to long non-coding RNA (lncRNA) cohesion regulator non-coding RNA DDX11-AS1/CONCR, which is able to increase both DDX11 ATPase activity and binding to DNA replicating regions. Also plays a role in heterochromatin organization. Involved in rRNA transcription activation through binding to active hypomethylated rDNA gene loci by recruiting UBTF and the RNA polymerase Pol I transcriptional machinery. Plays a role in embryonic development and prevention of aneuploidy. Involved in melanoma cell proliferation and survival. Associates with chromatin at DNA replication fork regions. Binds to single- and double-stranded DNAs. The chain is ATP-dependent DNA helicase DDX11 from Mus musculus (Mouse).